The following is an 89-amino-acid chain: Putative defensin-like protein 89 (89 aa).

An N-terminal signal peptide occupies residues 1–25 (MGFKNNLSLVSVMVFALILLPMISG). Disulfide bonds link Cys30–Cys66, Cys36–Cys57, Cys42–Cys64, and Cys46–Cys65.

It belongs to the DEFL family.

The protein localises to the secreted. This is Putative defensin-like protein 89 from Arabidopsis thaliana (Mouse-ear cress).